A 226-amino-acid chain; its full sequence is 7-cyano-7-deazaguanine synthase (226 aa).

12 to 22 (LSGGLDSATVV) lines the ATP pocket. Residues Cys191, Cys201, Cys204, and Cys207 each contribute to the Zn(2+) site.

This sequence belongs to the QueC family. The cofactor is Zn(2+).

The catalysed reaction is 7-carboxy-7-deazaguanine + NH4(+) + ATP = 7-cyano-7-deazaguanine + ADP + phosphate + H2O + H(+). It functions in the pathway purine metabolism; 7-cyano-7-deazaguanine biosynthesis. Functionally, catalyzes the ATP-dependent conversion of 7-carboxy-7-deazaguanine (CDG) to 7-cyano-7-deazaguanine (preQ(0)). This Pseudomonas syringae pv. tomato (strain ATCC BAA-871 / DC3000) protein is 7-cyano-7-deazaguanine synthase.